An 800-amino-acid polypeptide reads, in one-letter code: Internalin A (800 aa).

The first 35 residues, 1 to 35 (MRKKRYVWLKSILVAILVFGSGVWINTSNGTNAQA), serve as a signal peptide directing secretion. The 41-residue stretch at 36-76 (ATITQDTPINQIFTDTALAEKMKTVLGKTNVTDTVSQTDLD) folds into the LRRNT domain. 15 LRR repeats span residues 77 to 98 (QVTTLQADRLGIKSIDGVEYLN), 99 to 120 (NLTQINFSNNQLTDITPLKNLT), 121 to 142 (KLVDILMNNNQIADITPLANLT), 143 to 164 (NLTGLTLFNNQITDIDPLKNLT), 165 to 186 (NLNRLELSSNTISDISALSGLT), 187 to 207 (SLQQLSFGNQVTDLKPLANLT), 208 to 229 (TLERLDISSNKVSDISVLAKLT), 230 to 251 (NLESLIATNNQISDITPLGILT), 252 to 273 (NLDELSLNGNQLKDIGTLASLT), 274 to 295 (NLTDLDLANNQISNLAPLSGLT), 296 to 317 (KLTELKLGANQISNISPLAGLT), 318 to 339 (ALTNLELNENQLEDISPISNLK), 340 to 361 (NLTYLTLYFNNISDISPVSSLT), 362 to 383 (KLQRLFFYNNKVSDVSSLANLT), and 384 to 405 (NINWLSAGHNQISDLTPLANLT). The 90-residue stretch at 416-505 (AWTNAPVNYK…AIFNVKFHVD (90 aa)) folds into the LRRCT domain. A B-1 repeat occupies 518–587 (LLTEPAKPVK…TTSQTVDYQG (70 aa)). The segment at 518–706 (LLTEPAKPVK…ITLYAQFTKN (189 aa)) is 3 X approximate tandem repeats, type B. One copy of the B-2 repeat lies at 588–657 (LLQEPTAPTK…STTQAVDYQG (70 aa)). Residues 658–706 (LLKEPKAPTKAGYTFKGWYDEKTDGKKWDFATDKMPANDITLYAQFTKN) form a B-3 repeat. The interval 705–757 (KNPVAPPTTGGNTPPTTNNGGNTTPPSANIPGSDTSNTSTGNSASTTSTMNAY) is disordered. Over residues 711 to 753 (PTTGGNTPPTTNNGGNTTPPSANIPGSDTSNTSTGNSASTTST) the composition is skewed to low complexity. The LPXTG sorting signal signature appears at 767–771 (LPTTG). A Pentaglycyl murein peptidoglycan amidated threonine modification is found at threonine 770. The propeptide at 771 to 800 (GDSDNALYLLLGLLAVGTAMALTKKARASK) is removed by sortase A.

It belongs to the internalin family. As to quaternary structure, interacts with host (human) cadherin-1 (CDH1). The formation of the complex between inlA and cadherin-1 is calcium-dependent. Mutagenesis studies show it is possible to increase the affinity of InlA for CDH1 by rational engineering of InlA residues.

It is found in the secreted. The protein localises to the cell wall. With respect to regulation, bacterial uptake is inhibited by EDTA and by anti-E-cadherin antibodies. Mediates the entry of L.monocytogenes into host intestinal epithelial cells; transformation with inlA alone allows L.innocua (a non-invasive species) to be taken up by host cells. Binds to human receptor cadherin-1 (E-cadherin, CDH1); the chicken homolog of cadherin-1 but not cadherin-2 function as receptors. Mouse cadherin-1 is not a receptor, however mutating a single surface-exposed residue (Glu-172 to Pro in mouse) allows cadherin-1 to act as a receptor for InlA. In Listeria monocytogenes serovar 1/2a (strain ATCC BAA-679 / EGD-e), this protein is Internalin A.